We begin with the raw amino-acid sequence, 386 residues long: Leupaxin (386 aa).

M1 is modified (N-acetylmethionine). The short motif at 3–15 (ELDALLEELERST) is the LD motif 1 element. Residues 12-51 (ERSTLQDSDEYSNSAPLPLDQSSRKESNLDETSKMLSVQD) form a disordered region. A compositionally biased stretch (polar residues) spans 16-26 (LQDSDEYSNSA). Phosphoserine is present on S19. A Phosphotyrosine modification is found at Y22. The segment covering 33 to 44 (SSRKESNLDETS) has biased composition (basic and acidic residues). The residue at position 62 (Y62) is a Phosphotyrosine. Short sequence motifs (LD motif) lie at residues 70 to 82 (NVYSEVQEPKKSP) and 92 to 103 (QLDELMAHLSEM). Position 72 is a phosphotyrosine; by LYN (Y72). A Phosphoserine modification is found at S81. 4 consecutive LIM zinc-binding domains span residues 150–209 (GHCA…LFSP), 210–267 (RCAY…AMFS), 268–327 (PKCG…RRGT), and 328–386 (LCHG…LFSL).

Belongs to the paxillin family. As to quaternary structure, interacts with unphosphorylated ITGA4. Interacts with AR and SRF. Interacts with PTK2B/PYK2, PTPN22 and PTPN12. Interacts (via LD motif 3) with LYN and the interaction is induced upon B-cell antigen receptor (BCR) activation. Interacts (via LD motif 3) with PTK2/FAK. Phosphorylated on tyrosine residues. Phosphorylation on Tyr-72 is important for its inhibitory function. Bombesin stimulates phosphorylation on Tyr-22, Tyr-62 and Tyr-72.

Its subcellular location is the cytoplasm. It localises to the cell junction. The protein resides in the focal adhesion. It is found in the nucleus. The protein localises to the perinuclear region. Its subcellular location is the cell projection. It localises to the podosome. The protein resides in the cell membrane. Its function is as follows. Transcriptional coactivator for androgen receptor (AR) and serum response factor (SRF). Contributes to the regulation of cell adhesion, spreading and cell migration and acts as a negative regulator in integrin-mediated cell adhesion events. Suppresses the integrin-induced tyrosine phosphorylation of paxillin (PXN). May play a critical role as an adapter protein in the formation of the adhesion zone in osteoclasts. Negatively regulates B-cell antigen receptor (BCR) signaling. The polypeptide is Leupaxin (LPXN) (Oryctolagus cuniculus (Rabbit)).